Reading from the N-terminus, the 446-residue chain is NADH-quinone oxidoreductase subunit D (446 aa).

This sequence belongs to the complex I 49 kDa subunit family. NDH-1 is composed of 14 different subunits. Subunits NuoB, C, D, E, F, and G constitute the peripheral sector of the complex.

Its subcellular location is the cell membrane. The catalysed reaction is a quinone + NADH + 5 H(+)(in) = a quinol + NAD(+) + 4 H(+)(out). NDH-1 shuttles electrons from NADH, via FMN and iron-sulfur (Fe-S) centers, to quinones in the respiratory chain. The immediate electron acceptor for the enzyme in this species is believed to be a menaquinone. Couples the redox reaction to proton translocation (for every two electrons transferred, four hydrogen ions are translocated across the cytoplasmic membrane), and thus conserves the redox energy in a proton gradient. This chain is NADH-quinone oxidoreductase subunit D, found in Nocardioides sp. (strain ATCC BAA-499 / JS614).